Here is a 323-residue protein sequence, read N- to C-terminus: Peroxisomal targeting signal 2 receptor (323 aa).

6 WD repeats span residues 65–96, 109–141, 153–184, 196–227, 240–271, and 284–315; these read DWND…QLWD, EHAQ…KLWD, GHES…RIWD, AHQA…RGWD, GHTY…RFWN, and HHTE…KIYD.

This sequence belongs to the WD repeat peroxin-7 family. In terms of assembly, interacts with PEX5; interaction only takes place when PEX7 is associated with cargo proteins. Interacts with VWA8. As to expression, ubiquitous. Highest expression in pancreas, skeletal muscle and heart.

Its subcellular location is the cytoplasm. The protein resides in the cytosol. The protein localises to the peroxisome matrix. Its function is as follows. Receptor required for the peroxisomal import of proteins containing a C-terminal PTS2-type peroxisomal targeting signal. Specifically binds to cargo proteins containing a PTS2 peroxisomal targeting signal in the cytosol. Cargo protein-binding triggers interaction with PEX5 and formation of a ternary complex composed of PEX5 and PEX7 along with PTS2-containing cargo proteins, which is tranlocated into peroxisomes by passing through the PEX13-PEX14 docking complex. The protein is Peroxisomal targeting signal 2 receptor of Homo sapiens (Human).